The following is a 116-amino-acid chain: UPF0342 protein BH1149 (116 aa).

This sequence belongs to the UPF0342 family.

In Halalkalibacterium halodurans (strain ATCC BAA-125 / DSM 18197 / FERM 7344 / JCM 9153 / C-125) (Bacillus halodurans), this protein is UPF0342 protein BH1149.